A 340-amino-acid polypeptide reads, in one-letter code: Sulfotransferase ppzF (340 aa).

Its pathway is secondary metabolite biosynthesis. Its function is as follows. Sulfotransferase; part of the gene cluster that mediates the biosynthesis of pyrrolopyrazines, secondary metabolites showing insecticidal activity. The role of ppzF within the pathway has still to be determined. The single multifunctional NRPS ppzA is sufficient to produce peramine via condensation of 1-pyrroline-5-carboxylate and arginine, N-methylation of the alpha-amino group of arginine and reduction of the thioester and the cyclization to form an iminium ion resulting in release from the peptide synthetase. Deprotonation of this intermediate and oxidation of the pyrroline ring would give rise to peramine. In Epichloe species that produce only peramine, the peramine synthetase gene is not localized in a gene cluster, in contrast to Metarhizium species that contain additional pyrrolopyrazine biosynthesis genes. The 2-oxoglutarate-Fe(II) type oxidoreductase ppzC hydroxylates peramine to yield the newly identified compound 8-hydroxyperamine whereas ppzD converts L-proline into trans-4-hydroxy-L-proline, a precursor of peramine biosynthesis. In Metarhizium majus (strain ARSEF 297), this protein is Sulfotransferase ppzF.